A 248-amino-acid polypeptide reads, in one-letter code: Geranylgeranylglyceryl phosphate synthase (248 aa).

Mg(2+) contacts are provided by Asp-25 and Ser-50. Sn-glycerol 1-phosphate is bound by residues 170–176 (YLEAGSG), 201–202 (GG), and 223–224 (GT).

Belongs to the GGGP/HepGP synthase family. Group II subfamily. Mg(2+) is required as a cofactor.

The protein localises to the cytoplasm. The catalysed reaction is sn-glycerol 1-phosphate + (2E,6E,10E)-geranylgeranyl diphosphate = sn-3-O-(geranylgeranyl)glycerol 1-phosphate + diphosphate. It functions in the pathway membrane lipid metabolism; glycerophospholipid metabolism. Prenyltransferase that catalyzes the transfer of the geranylgeranyl moiety of geranylgeranyl diphosphate (GGPP) to the C3 hydroxyl of sn-glycerol-1-phosphate (G1P). This reaction is the first ether-bond-formation step in the biosynthesis of archaeal membrane lipids. This is Geranylgeranylglyceryl phosphate synthase from Methanococcus aeolicus (strain ATCC BAA-1280 / DSM 17508 / OCM 812 / Nankai-3).